Consider the following 112-residue polypeptide: Protein Tat (112 aa).

The tract at residues 1 to 24 (MDPVDPEMPPWHHPGSKPQTPCNN) is interaction with human CREBBP. The interval 1 to 48 (MDPVDPEMPPWHHPGSKPQTPCNNCYCKRCCYHCYVCFTKKGLGISHG) is transactivation. 3 residues coordinate Zn(2+): C22, C25, and C27. A cysteine-rich region spans residues 22 to 37 (CNNCYCKRCCYHCYVC). Position 28 is an N6-acetyllysine; by host PCAF (K28). Zn(2+) is bound by residues C30, H33, C34, and C37. Positions 38–48 (FTKKGLGISHG) are core. The interval 45 to 112 (ISHGRKKRRR…CNSCTRISGQ (68 aa)) is disordered. Positions 49 to 56 (RKKRRRPA) match the Nuclear localization signal, RNA-binding (TAR), and protein transduction motif. The interaction with the host capping enzyme RNGTT stretch occupies residues 49–82 (RKKRRRPAAAASYPDNKDPVPEQHTGRKQKRQEE). N6-acetyllysine; by host EP300 and GCN5L2 occurs at positions 50 and 51. An asymmetric dimethylarginine; by host PRMT6 mark is found at R52 and R53. Residues 63–91 (DNKDPVPEQHTGRKQKRQEEQEKKVEKET) are compositionally biased toward basic and acidic residues. Residues 93–112 (PSGQPCHQDSCNSCTRISGQ) show a composition bias toward polar residues.

The protein belongs to the lentiviruses Tat family. In terms of assembly, interacts with host CCNT1. Associates with the P-TEFb complex composed at least of Tat, P-TEFb (CDK9 and CCNT1), TAR RNA, RNA Pol II. Recruits the HATs CREBBP, TAF1/TFIID, EP300, PCAF and GCN5L2. Interacts with host KAT5/Tip60; this interaction targets the latter to degradation. Interacts with the host deacetylase SIRT1. Interacts with host capping enzyme RNGTT; this interaction stimulates RNGTT. Binds to host KDR, and to the host integrins ITGAV/ITGB3 and ITGA5/ITGB1. Interacts with host KPNB1/importin beta-1 without previous binding to KPNA1/importin alpha-1. Interacts with EIF2AK2. Interacts with host nucleosome assembly protein NAP1L1; this interaction may be required for the transport of Tat within the nucleus, since the two proteins interact at the nuclear rim. Interacts with host C1QBP/SF2P32; this interaction involves lysine-acetylated Tat. Interacts with the host chemokine receptors CCR2, CCR3 and CXCR4. Interacts with host DPP4/CD26; this interaction may trigger an anti-proliferative effect. Interacts with host LDLR. Interacts with the host extracellular matrix metalloproteinase MMP1. Interacts with host PRMT6; this interaction mediates Tat's methylation. Interacts with, and is ubiquitinated by MDM2/Hdm2. Interacts with host PSMC3 and HTATIP2. Interacts with STAB1; this interaction may overcome SATB1-mediated repression of IL2 and IL2RA (interleukin) in T cells by binding to the same domain than HDAC1. Interacts (when acetylated) with human CDK13, thereby increasing HIV-1 mRNA splicing and promoting the production of the doubly spliced HIV-1 protein Nef. Interacts with host TBP; this interaction modulates the activity of transcriptional pre-initiation complex. Interacts with host RELA. Interacts with host PLSCR1; this interaction negatively regulates Tat transactivation activity by altering its subcellular distribution. Post-translationally, asymmetrical arginine methylation by host PRMT6 seems to diminish the transactivation capacity of Tat and affects the interaction with host CCNT1. Acetylation by EP300, CREBBP, GCN5L2/GCN5 and PCAF regulates the transactivation activity of Tat. EP300-mediated acetylation of Lys-50 promotes dissociation of Tat from the TAR RNA through the competitive binding to PCAF's bromodomain. In addition, the non-acetylated Tat's N-terminus can also interact with PCAF. PCAF-mediated acetylation of Lys-28 enhances Tat's binding to CCNT1. Lys-50 is deacetylated by SIRT1. In terms of processing, polyubiquitination by host MDM2 does not target Tat to degradation, but activates its transactivation function and fosters interaction with CCNT1 and TAR RNA. Post-translationally, phosphorylated by EIF2AK2 on serine and threonine residues adjacent to the basic region important for TAR RNA binding and function. Phosphorylation of Tat by EIF2AK2 is dependent on the prior activation of EIF2AK2 by dsRNA.

Its subcellular location is the host nucleus. The protein localises to the host nucleolus. It is found in the host cytoplasm. It localises to the secreted. In terms of biological role, transcriptional activator that increases RNA Pol II processivity, thereby increasing the level of full-length viral transcripts. Recognizes a hairpin structure at the 5'-LTR of the nascent viral mRNAs referred to as the transactivation responsive RNA element (TAR) and recruits the cyclin T1-CDK9 complex (P-TEFb complex) that will in turn hyperphosphorylate the RNA polymerase II to allow efficient elongation. The CDK9 component of P-TEFb and other Tat-activated kinases hyperphosphorylate the C-terminus of RNA Pol II that becomes stabilized and much more processive. Other factors such as HTATSF1/Tat-SF1, SUPT5H/SPT5, and HTATIP2 are also important for Tat's function. Besides its effect on RNA Pol II processivity, Tat induces chromatin remodeling of proviral genes by recruiting the histone acetyltransferases (HATs) CREBBP, EP300 and PCAF to the chromatin. This also contributes to the increase in proviral transcription rate, especially when the provirus integrates in transcriptionally silent region of the host genome. To ensure maximal activation of the LTR, Tat mediates nuclear translocation of NF-kappa-B by interacting with host RELA. Through its interaction with host TBP, Tat may also modulate transcription initiation. Tat can reactivate a latently infected cell by penetrating in it and transactivating its LTR promoter. In the cytoplasm, Tat is thought to act as a translational activator of HIV-1 mRNAs. Functionally, extracellular circulating Tat can be endocytosed by surrounding uninfected cells via the binding to several surface receptors such as CD26, CXCR4, heparan sulfate proteoglycans (HSPG) or LDLR. Neurons are rarely infected, but they internalize Tat via their LDLR. Through its interaction with nuclear HATs, Tat is potentially able to control the acetylation-dependent cellular gene expression. Modulates the expression of many cellular genes involved in cell survival, proliferation or in coding for cytokines or cytokine receptors. Tat plays a role in T-cell and neurons apoptosis. Tat induced neurotoxicity and apoptosis probably contribute to neuroAIDS. Circulating Tat also acts as a chemokine-like and/or growth factor-like molecule that binds to specific receptors on the surface of the cells, affecting many cellular pathways. In the vascular system, Tat binds to ITGAV/ITGB3 and ITGA5/ITGB1 integrins dimers at the surface of endothelial cells and competes with bFGF for heparin-binding sites, leading to an excess of soluble bFGF. This is Protein Tat from Homo sapiens (Human).